A 78-amino-acid polypeptide reads, in one-letter code: Acyl carrier protein (78 aa).

The Carrier domain occupies 2-77; that stretch reads SDTVERVKKI…DAVKFIDKAS (76 aa). The residue at position 37 (Ser37) is an O-(pantetheine 4'-phosphoryl)serine.

It belongs to the acyl carrier protein (ACP) family. Post-translationally, 4'-phosphopantetheine is transferred from CoA to a specific serine of apo-ACP by AcpS. This modification is essential for activity because fatty acids are bound in thioester linkage to the sulfhydryl of the prosthetic group.

The protein resides in the cytoplasm. The protein operates within lipid metabolism; fatty acid biosynthesis. Functionally, carrier of the growing fatty acid chain in fatty acid biosynthesis. This Bartonella henselae (strain ATCC 49882 / DSM 28221 / CCUG 30454 / Houston 1) (Rochalimaea henselae) protein is Acyl carrier protein.